The sequence spans 170 residues: NADH-quinone oxidoreductase subunit B (170 aa).

The [4Fe-4S] cluster site is built by Cys37, Cys38, Cys102, and Cys131.

This sequence belongs to the complex I 20 kDa subunit family. NDH-1 is composed of 14 different subunits. Subunits NuoB, C, D, E, F, and G constitute the peripheral sector of the complex. It depends on [4Fe-4S] cluster as a cofactor.

The protein resides in the cell inner membrane. The enzyme catalyses a quinone + NADH + 5 H(+)(in) = a quinol + NAD(+) + 4 H(+)(out). Functionally, NDH-1 shuttles electrons from NADH, via FMN and iron-sulfur (Fe-S) centers, to quinones in the respiratory chain. The immediate electron acceptor for the enzyme in this species is believed to be ubiquinone. Couples the redox reaction to proton translocation (for every two electrons transferred, four hydrogen ions are translocated across the cytoplasmic membrane), and thus conserves the redox energy in a proton gradient. This is NADH-quinone oxidoreductase subunit B from Geobacter sp. (strain M21).